Consider the following 216-residue polypeptide: Hexitol phosphatase A (216 aa).

Catalysis depends on Asp-9, which acts as the Nucleophile. A divalent metal cation is bound by residues Asp-9 and Asp-11. Substrate is bound by residues 9-11, 106-107, and Lys-138; these read DLD and TS. Asp-11 functions as the Proton donor in the catalytic mechanism. Asp-163 contributes to the a divalent metal cation binding site.

The protein belongs to the HAD-like hydrolase superfamily. CbbY/CbbZ/Gph/YieH family. The cofactor is Mg(2+). It depends on Mn(2+) as a cofactor. Co(2+) is required as a cofactor.

The catalysed reaction is sugar phosphate + H2O = sugar + phosphate.. It carries out the reaction D-mannitol 1-phosphate + H2O = D-mannitol + phosphate. It catalyses the reaction D-sorbitol 6-phosphate + H2O = D-sorbitol + phosphate. Functionally, sugar-phosphate phosphohydrolase that appears to contribute to butanol tolerance. Catalyzes the dephosphorylation of D-mannitol 1-phosphate and D-sorbitol 6-phosphate. Is also able to dephosphorylate other sugar phosphates in vitro including ribose-5-phosphate (Rib5P), 2-deoxyribose-5-phosphate, fructose-1-phosphate (Fru1P), fructose-6-phosphate (Fru6P), and glucose-6-phosphate (Glu6P). Selectively hydrolyzes beta-D-glucose-1-phosphate (bGlu1P) and has no activity with the alpha form. This chain is Hexitol phosphatase A, found in Escherichia coli (strain K12).